The primary structure comprises 332 residues: Phenylalanine--tRNA ligase alpha subunit (332 aa).

Position 254 (E254) interacts with Mg(2+).

Belongs to the class-II aminoacyl-tRNA synthetase family. Phe-tRNA synthetase alpha subunit type 1 subfamily. In terms of assembly, tetramer of two alpha and two beta subunits. Mg(2+) serves as cofactor.

The protein resides in the cytoplasm. The catalysed reaction is tRNA(Phe) + L-phenylalanine + ATP = L-phenylalanyl-tRNA(Phe) + AMP + diphosphate + H(+). This Hydrogenovibrio crunogenus (strain DSM 25203 / XCL-2) (Thiomicrospira crunogena) protein is Phenylalanine--tRNA ligase alpha subunit.